Consider the following 874-residue polypeptide: Leucine--tRNA ligase (874 aa).

Residues 43–53 (PYPSGRIHIGH) carry the 'HIGH' region motif. A 'KMSKS' region motif is present at residues 630–634 (KMSKS). Lys633 is a binding site for ATP.

This sequence belongs to the class-I aminoacyl-tRNA synthetase family.

It localises to the cytoplasm. The catalysed reaction is tRNA(Leu) + L-leucine + ATP = L-leucyl-tRNA(Leu) + AMP + diphosphate. This Bradyrhizobium sp. (strain BTAi1 / ATCC BAA-1182) protein is Leucine--tRNA ligase.